Reading from the N-terminus, the 408-residue chain is Cytochrome bc1 complex Rieske iron-sulfur subunit (408 aa).

3 consecutive transmembrane segments (helical) span residues V56–F76, M98–V118, and L162–M182. In terms of domain architecture, Rieske spans H293–I390. C333, H335, C352, and H355 together coordinate [2Fe-2S] cluster. The cysteines at positions 338 and 354 are disulfide-linked.

It belongs to the Rieske iron-sulfur protein family. The cytochrome bc1 complex is composed of a cytochrome b (QcrB), the Rieske iron-sulfur protein (QcrA) and a diheme cytochrome c (QcrC) subunit. The bc1 complex forms a supercomplex with cytochrome c oxidase (cytochrome aa3). The cofactor is [2Fe-2S] cluster.

It is found in the cell membrane. In terms of biological role, iron-sulfur subunit of the cytochrome bc1 complex, an essential component of the respiratory electron transport chain required for ATP synthesis. The bc1 complex catalyzes the oxidation of menaquinol and the reduction of cytochrome c in the respiratory chain. The bc1 complex operates through a Q-cycle mechanism that couples electron transfer to generation of the proton gradient that drives ATP synthesis. This Corynebacterium glutamicum (strain ATCC 13032 / DSM 20300 / JCM 1318 / BCRC 11384 / CCUG 27702 / LMG 3730 / NBRC 12168 / NCIMB 10025 / NRRL B-2784 / 534) protein is Cytochrome bc1 complex Rieske iron-sulfur subunit (qcrA).